The chain runs to 384 residues: tRNA-specific 2-thiouridylase MnmA (384 aa).

ATP is bound by residues 13 to 20 (GLSGGVDS) and Met-39. The interaction with target base in tRNA stretch occupies residues 99–101 (NPD). The Nucleophile role is filled by Cys-104. Cysteines 104 and 215 form a disulfide. Gly-128 contributes to the ATP binding site. Positions 165 to 167 (KDQ) are interaction with tRNA. Catalysis depends on Cys-215, which acts as the Cysteine persulfide intermediate. The segment at 333–334 (RY) is interaction with tRNA.

The protein belongs to the MnmA/TRMU family.

It localises to the cytoplasm. It catalyses the reaction S-sulfanyl-L-cysteinyl-[protein] + uridine(34) in tRNA + AH2 + ATP = 2-thiouridine(34) in tRNA + L-cysteinyl-[protein] + A + AMP + diphosphate + H(+). Its function is as follows. Catalyzes the 2-thiolation of uridine at the wobble position (U34) of tRNA, leading to the formation of s(2)U34. The polypeptide is tRNA-specific 2-thiouridylase MnmA (Albidiferax ferrireducens (strain ATCC BAA-621 / DSM 15236 / T118) (Rhodoferax ferrireducens)).